We begin with the raw amino-acid sequence, 682 residues long: Histone deacetylase 18 (682 aa).

Residues 59 to 382 (KVGLVYDETM…SLACVQVLLE (324 aa)) form a histone deacetylase region. His191 serves as the catalytic Proton donor/acceptor. Residues Asp231, His233, and Asp324 each coordinate Zn(2+). Residues 430–608 (SAERNSADAL…DKELQEDRSR (179 aa)) are a coiled coil.

The protein belongs to the histone deacetylase family. HD type 2 subfamily. Requires Zn(2+) as cofactor. Expressed in roots, stems, young rosette leaves, flowers and siliques.

The protein resides in the nucleus. The protein localises to the cytoplasm. The catalysed reaction is N(6)-acetyl-L-lysyl-[histone] + H2O = L-lysyl-[histone] + acetate. Its function is as follows. Responsible for the deacetylation of lysine residues on the N-terminal part of the core histones (H2A, H2B, H3 and H4). Histone deacetylation gives a tag for epigenetic repression and plays an important role in transcriptional regulation, cell cycle progression and developmental events. Histone deacetylases act via the formation of large multiprotein complexes. Required for appropriate cellular patterning in the root epidermis. Involved in the differentiation of hair and non-hair cells in the root epidermis. Is not directly involved in the regulation of the expression of pattern genes. Regulates the transcription of certain kinase genes, which are components of a positional information relay system, by changing their histone acetylation status. The polypeptide is Histone deacetylase 18 (Arabidopsis thaliana (Mouse-ear cress)).